Here is a 433-residue protein sequence, read N- to C-terminus: Alpha-(1,3)-fucosyltransferase fut-1 (433 aa).

Residues 1–12 (MTARSIKLFFAR) lie on the Cytoplasmic side of the membrane. Residues 13–32 (WKYLMFACCITYLLVIYAPI) form a helical; Signal-anchor for type II membrane protein membrane-spanning segment. Over 33–433 (SKSEQKDWKE…GTLVDSIPLD (401 aa)) the chain is Lumenal. N-linked (GlcNAc...) asparagine glycans are attached at residues Asn-194 and Asn-359.

The protein belongs to the glycosyltransferase 10 family. Mg(2+) serves as cofactor. Requires Mn(2+) as cofactor. Post-translationally, N-glycosylated. Glycosylation is important for enzymatic activity. Expressed in the pharyngeal-intestinal (PI) and anal valves. Expressed in ASG neurons and in one or two neurons in the retrovesicular ganglion and two neurons posterior to the PI valve and PHA and PHB neurons in the tail.

The protein localises to the golgi apparatus. It is found in the golgi stack membrane. The catalysed reaction is N(4)-{beta-D-GlcNAc-(1-&gt;2)-alpha-D-Man-(1-&gt;3)-[beta-D-GlcNAc-(1-&gt;2)-alpha-D-Man-(1-&gt;6)]-beta-D-Man-(1-&gt;4)-beta-D-GlcNAc-(1-&gt;4)-beta-D-GlcNAc}-L-asparaginyl-[protein] + GDP-beta-L-fucose = N(4)-{beta-D-GlcNAc-(1-&gt;2)-alpha-D-Man-(1-&gt;3)-[beta-D-GlcNAc-(1-&gt;2)-alpha-D-Man-(1-&gt;6)]-beta-D-Man-(1-&gt;4)-beta-D-GlcNAc-(1-&gt;4)-[alpha-L-Fuc(1-&gt;3)]-beta-D-GlcNAc}-L-asparaginyl-[protein] + GDP + H(+). It functions in the pathway protein modification; protein glycosylation. With respect to regulation, inhibited by Cu(2+) or Zn(2+) and to a lesser extent Ni(2+) ions. Its function is as follows. Preferentially catalyzes the addition of fucose in alpha 1-3 linkage to the first GlcNAc residue (with or without alpha 1,6-linked fucose), next to the peptide chains in N-glycans. Unlike in mammals, does not require the prior action of N-acetylglucosaminyltransferase I to generate complex N-glycans. In Caenorhabditis elegans, this protein is Alpha-(1,3)-fucosyltransferase fut-1.